The chain runs to 43 residues: Omega-ctenitoxin-Pr1a (43 aa).

Intrachain disulfides connect C2–C17, C9–C22, C16–C33, and C24–C31. At G43 the chain carries Glycine amide.

As to expression, expressed by the venom gland.

The protein resides in the secreted. In terms of biological role, inhibits high-voltage activated calcium channels. Shifts the voltage-dependence for activation towards hyperpolarized membrane potentials for L- (Cav1), P/Q- (Cav2.1/CACNA1A) and R-type (Cav2.3/CACNA1E) calcium currents. Causes immediate agitation and clockwise gyration, followed by the gradual development of general flaccid paralysis when injected intracerebroventricular into mice at dose levels of 5 ug per mouse. This Phoneutria reidyi (Brazilian Amazonian armed spider) protein is Omega-ctenitoxin-Pr1a.